Reading from the N-terminus, the 139-residue chain is Holo-[acyl-carrier-protein] synthase (139 aa).

Asp-8 and Glu-57 together coordinate Mg(2+).

The protein belongs to the P-Pant transferase superfamily. AcpS family. It depends on Mg(2+) as a cofactor.

It is found in the cytoplasm. The enzyme catalyses apo-[ACP] + CoA = holo-[ACP] + adenosine 3',5'-bisphosphate + H(+). Functionally, transfers the 4'-phosphopantetheine moiety from coenzyme A to a Ser of acyl-carrier-protein. In Dinoroseobacter shibae (strain DSM 16493 / NCIMB 14021 / DFL 12), this protein is Holo-[acyl-carrier-protein] synthase.